The sequence spans 239 residues: Lactate utilization protein A (239 aa).

This sequence belongs to the LutA/YkgE family.

In terms of biological role, is involved in L-lactate degradation and allows cells to grow with lactate as the sole carbon source. This chain is Lactate utilization protein A, found in Geobacillus kaustophilus (strain HTA426).